Here is a 189-residue protein sequence, read N- to C-terminus: MTITFSAVILAGGQARRMGGVDKGLQLFRNQPLFEHIYQRLQPQIADVAINANRNQQRYAQSGLPVFSDDLAGFQGPLSGILTALQRAQSNFVLFVPCDCPFFPMDLFAKLKHAVISQHAQLAYAHDGEREHPTFCLVSTSLAPALAQYLATGERRMLTFMQQQHAIAVDFSATPDAFKNINNLVDLQT.

GTP contacts are provided by residues 10 to 12 (LAG), Lys23, Asn51, Asp69, and Asp99. Asp99 contributes to the Mg(2+) binding site.

The protein belongs to the MobA family. In terms of assembly, monomer. Requires Mg(2+) as cofactor.

It is found in the cytoplasm. It carries out the reaction Mo-molybdopterin + GTP + H(+) = Mo-molybdopterin guanine dinucleotide + diphosphate. Transfers a GMP moiety from GTP to Mo-molybdopterin (Mo-MPT) cofactor (Moco or molybdenum cofactor) to form Mo-molybdopterin guanine dinucleotide (Mo-MGD) cofactor. The protein is Molybdenum cofactor guanylyltransferase of Pasteurella multocida (strain Pm70).